A 142-amino-acid polypeptide reads, in one-letter code: Large ribosomal subunit protein uL13 (142 aa).

This sequence belongs to the universal ribosomal protein uL13 family. Part of the 50S ribosomal subunit.

Its function is as follows. This protein is one of the early assembly proteins of the 50S ribosomal subunit, although it is not seen to bind rRNA by itself. It is important during the early stages of 50S assembly. This chain is Large ribosomal subunit protein uL13, found in Edwardsiella ictaluri (strain 93-146).